Here is a 534-residue protein sequence, read N- to C-terminus: Light-independent protochlorophyllide reductase subunit B (534 aa).

Asp36 serves as a coordination point for [4Fe-4S] cluster. The active-site Proton donor is Asp274. A substrate-binding site is contributed by Gly409–Leu410. The disordered stretch occupies residues Asp426–Asp446.

This sequence belongs to the ChlB/BchB/BchZ family. In terms of assembly, protochlorophyllide reductase is composed of three subunits; BchL, BchN and BchB. Forms a heterotetramer of two BchB and two BchN subunits. The cofactor is [4Fe-4S] cluster.

The enzyme catalyses chlorophyllide a + oxidized 2[4Fe-4S]-[ferredoxin] + 2 ADP + 2 phosphate = protochlorophyllide a + reduced 2[4Fe-4S]-[ferredoxin] + 2 ATP + 2 H2O. The protein operates within porphyrin-containing compound metabolism; bacteriochlorophyll biosynthesis (light-independent). Its function is as follows. Component of the dark-operative protochlorophyllide reductase (DPOR) that uses Mg-ATP and reduced ferredoxin to reduce ring D of protochlorophyllide (Pchlide) to form chlorophyllide a (Chlide). This reaction is light-independent. The NB-protein (BchN-BchB) is the catalytic component of the complex. The polypeptide is Light-independent protochlorophyllide reductase subunit B (Cereibacter sphaeroides (strain ATCC 17029 / ATH 2.4.9) (Rhodobacter sphaeroides)).